The sequence spans 280 residues: Adenosylcobinamide-GDP ribazoletransferase (280 aa).

The next 6 helical transmembrane spans lie at 4–24 (YLLA…GISM), 39–59 (VVGA…QVIF), 61–81 (GPVL…FNHL), 108–128 (TIGT…YGSI), 196–216 (FLIG…WIGL), and 255–275 (TALI…MGGF).

Belongs to the CobS family. The cofactor is Mg(2+).

The protein resides in the cell membrane. The enzyme catalyses alpha-ribazole + adenosylcob(III)inamide-GDP = adenosylcob(III)alamin + GMP + H(+). It catalyses the reaction alpha-ribazole 5'-phosphate + adenosylcob(III)inamide-GDP = adenosylcob(III)alamin 5'-phosphate + GMP + H(+). Its pathway is cofactor biosynthesis; adenosylcobalamin biosynthesis; adenosylcobalamin from cob(II)yrinate a,c-diamide: step 7/7. Its function is as follows. Joins adenosylcobinamide-GDP and alpha-ribazole to generate adenosylcobalamin (Ado-cobalamin). Also synthesizes adenosylcobalamin 5'-phosphate from adenosylcobinamide-GDP and alpha-ribazole 5'-phosphate. This chain is Adenosylcobinamide-GDP ribazoletransferase, found in Methanosarcina barkeri (strain Fusaro / DSM 804).